The chain runs to 437 residues: GTPase Obg (437 aa).

The Obg domain maps to 2–160 (SMFLDTAKIS…RQLELELKIL (159 aa)). One can recognise an OBG-type G domain in the interval 161–338 (ADVGLVGFPS…LLEATAELLA (178 aa)). Residues 167 to 174 (GFPSVGKS), 192 to 196 (FTTIV), 214 to 217 (DLPG), 284 to 287 (NKMD), and 319 to 321 (SSL) contribute to the GTP site. Mg(2+) is bound by residues S174 and T194. The OCT domain maps to 359–437 (GFAEAEKEFE…IGKFEFEFVD (79 aa)).

This sequence belongs to the TRAFAC class OBG-HflX-like GTPase superfamily. OBG GTPase family. As to quaternary structure, monomer. Mg(2+) is required as a cofactor.

The protein resides in the cytoplasm. Functionally, an essential GTPase which binds GTP, GDP and possibly (p)ppGpp with moderate affinity, with high nucleotide exchange rates and a fairly low GTP hydrolysis rate. Plays a role in control of the cell cycle, stress response, ribosome biogenesis and in those bacteria that undergo differentiation, in morphogenesis control. This chain is GTPase Obg, found in Streptococcus pyogenes serotype M28 (strain MGAS6180).